The following is a 394-amino-acid chain: Elongation factor Tu (394 aa).

Residues 10–204 form the tr-type G domain; the sequence is KPHVNIGTIG…AVDSYIPQPV (195 aa). Residues 19–26 are G1; it reads GHVDHGKT. 19-26 lines the GTP pocket; that stretch reads GHVDHGKT. T26 lines the Mg(2+) pocket. The interval 60–64 is G2; it reads GITIS. Residues 81 to 84 are G3; that stretch reads DCPG. Residues 81-85 and 136-139 contribute to the GTP site; these read DCPGH and NKVD. The tract at residues 136-139 is G4; that stretch reads NKVD. The segment at 174 to 176 is G5; that stretch reads SAL.

It belongs to the TRAFAC class translation factor GTPase superfamily. Classic translation factor GTPase family. EF-Tu/EF-1A subfamily. As to quaternary structure, monomer.

Its subcellular location is the cytoplasm. It catalyses the reaction GTP + H2O = GDP + phosphate + H(+). GTP hydrolase that promotes the GTP-dependent binding of aminoacyl-tRNA to the A-site of ribosomes during protein biosynthesis. The chain is Elongation factor Tu from Rickettsia helvetica.